We begin with the raw amino-acid sequence, 317 residues long: tRNA N6-adenosine threonylcarbamoyltransferase (317 aa).

Positions 110 and 114 each coordinate Fe cation. Substrate contacts are provided by residues 132–136 (VVSGG), Asp-165, Gly-178, Asp-182, and Asn-271. Asp-300 is a Fe cation binding site.

It belongs to the KAE1 / TsaD family. The cofactor is Fe(2+).

Its subcellular location is the cytoplasm. It catalyses the reaction L-threonylcarbamoyladenylate + adenosine(37) in tRNA = N(6)-L-threonylcarbamoyladenosine(37) in tRNA + AMP + H(+). In terms of biological role, required for the formation of a threonylcarbamoyl group on adenosine at position 37 (t(6)A37) in tRNAs that read codons beginning with adenine. Is involved in the transfer of the threonylcarbamoyl moiety of threonylcarbamoyl-AMP (TC-AMP) to the N6 group of A37, together with TsaE and TsaB. TsaD likely plays a direct catalytic role in this reaction. The polypeptide is tRNA N6-adenosine threonylcarbamoyltransferase (Mesoplasma florum (strain ATCC 33453 / NBRC 100688 / NCTC 11704 / L1) (Acholeplasma florum)).